A 306-amino-acid chain; its full sequence is MPSHADLDRQISQLRECKFLGEAEVRALCEQAKAILMEEWNVQPVRCPVTVCGDIHGQFYDLIELFRIGGDSPDTNYLFMGDYVDRGYYSVETVTLLVALKVRYRDRITILRGNHESRQITQVYGFYDECLRKYGNANVWKYFTDLFDYLPLTALVENQVFCLHGGLSPSLDTLDNIRALDRIQEVPHEGPMCDLLWSDPDDRCGWGISPRGAGYTFGQDIAQQFNHTNGLTLISRAHQLVMEGFNWCQDKNVVTVFSAPNYCYRCGNMAAILEIGENMDQNFLQFDPAPRQIEPDTTRKTPDYFL.

The Mn(2+) site is built by aspartate 54, histidine 56, aspartate 82, and asparagine 114. Histidine 115 functions as the Proton donor in the catalytic mechanism. Histidine 164 and histidine 238 together coordinate Mn(2+).

This sequence belongs to the PPP phosphatase family. PP-2A subfamily. Mn(2+) is required as a cofactor.

The protein resides in the cytoplasm. It carries out the reaction O-phospho-L-seryl-[protein] + H2O = L-seryl-[protein] + phosphate. The enzyme catalyses O-phospho-L-threonyl-[protein] + H2O = L-threonyl-[protein] + phosphate. This chain is Serine/threonine-protein phosphatase PP2A-1 catalytic subunit (PP2A1), found in Oryza sativa subsp. indica (Rice).